A 271-amino-acid chain; its full sequence is 4-hydroxy-tetrahydrodipicolinate reductase (271 aa).

Residues 11-16 and Glu37 each bind NAD(+); that span reads GGSGRM. Residue Arg38 participates in NADP(+) binding. Residues 101 to 103 and 125 to 128 contribute to the NAD(+) site; these read GTT and APNM. Residue His158 is the Proton donor/acceptor of the active site. Residue His159 participates in (S)-2,3,4,5-tetrahydrodipicolinate binding. Lys162 functions as the Proton donor in the catalytic mechanism. 168-169 contributes to the (S)-2,3,4,5-tetrahydrodipicolinate binding site; that stretch reads GT.

It belongs to the DapB family.

The protein resides in the cytoplasm. It carries out the reaction (S)-2,3,4,5-tetrahydrodipicolinate + NAD(+) + H2O = (2S,4S)-4-hydroxy-2,3,4,5-tetrahydrodipicolinate + NADH + H(+). The enzyme catalyses (S)-2,3,4,5-tetrahydrodipicolinate + NADP(+) + H2O = (2S,4S)-4-hydroxy-2,3,4,5-tetrahydrodipicolinate + NADPH + H(+). It functions in the pathway amino-acid biosynthesis; L-lysine biosynthesis via DAP pathway; (S)-tetrahydrodipicolinate from L-aspartate: step 4/4. Functionally, catalyzes the conversion of 4-hydroxy-tetrahydrodipicolinate (HTPA) to tetrahydrodipicolinate. This chain is 4-hydroxy-tetrahydrodipicolinate reductase, found in Shewanella piezotolerans (strain WP3 / JCM 13877).